Consider the following 153-residue polypeptide: D-aminoacyl-tRNA deacylase (153 aa).

A Gly-cisPro motif, important for rejection of L-amino acids motif is present at residues Gly-142–Pro-143.

The protein belongs to the DTD family. In terms of assembly, homodimer.

It is found in the cytoplasm. The enzyme catalyses glycyl-tRNA(Ala) + H2O = tRNA(Ala) + glycine + H(+). The catalysed reaction is a D-aminoacyl-tRNA + H2O = a tRNA + a D-alpha-amino acid + H(+). Its function is as follows. An aminoacyl-tRNA editing enzyme that deacylates mischarged D-aminoacyl-tRNAs. Also deacylates mischarged glycyl-tRNA(Ala), protecting cells against glycine mischarging by AlaRS. Acts via tRNA-based rather than protein-based catalysis; rejects L-amino acids rather than detecting D-amino acids in the active site. By recycling D-aminoacyl-tRNA to D-amino acids and free tRNA molecules, this enzyme counteracts the toxicity associated with the formation of D-aminoacyl-tRNA entities in vivo and helps enforce protein L-homochirality. This chain is D-aminoacyl-tRNA deacylase, found in Cupriavidus taiwanensis (strain DSM 17343 / BCRC 17206 / CCUG 44338 / CIP 107171 / LMG 19424 / R1) (Ralstonia taiwanensis (strain LMG 19424)).